The following is a 100-amino-acid chain: Small ribosomal subunit protein uS14 (100 aa).

It belongs to the universal ribosomal protein uS14 family. In terms of assembly, part of the 30S ribosomal subunit. Contacts proteins S3 and S10.

Binds 16S rRNA, required for the assembly of 30S particles and may also be responsible for determining the conformation of the 16S rRNA at the A site. This Rippkaea orientalis (strain PCC 8801 / RF-1) (Cyanothece sp. (strain PCC 8801)) protein is Small ribosomal subunit protein uS14.